We begin with the raw amino-acid sequence, 465 residues long: tRNA modification GTPase MnmE (465 aa).

(6S)-5-formyl-5,6,7,8-tetrahydrofolate contacts are provided by R25, E87, and R126. A TrmE-type G domain is found at 222-386 (TIRVVLRGLP…LIERLVQFAE (165 aa)). Residues 232 to 237 (NAGKSR), 251 to 257 (TDQAGTT), and 276 to 279 (DTAG) each bind GTP. S236 and T257 together coordinate Mg(2+). K465 is a binding site for (6S)-5-formyl-5,6,7,8-tetrahydrofolate.

This sequence belongs to the TRAFAC class TrmE-Era-EngA-EngB-Septin-like GTPase superfamily. TrmE GTPase family. In terms of assembly, homodimer. Heterotetramer of two MnmE and two MnmG subunits. K(+) is required as a cofactor.

The protein resides in the cytoplasm. Its function is as follows. Exhibits a very high intrinsic GTPase hydrolysis rate. Involved in the addition of a carboxymethylaminomethyl (cmnm) group at the wobble position (U34) of certain tRNAs, forming tRNA-cmnm(5)s(2)U34. The protein is tRNA modification GTPase MnmE of Rhodopirellula baltica (strain DSM 10527 / NCIMB 13988 / SH1).